Here is a 338-residue protein sequence, read N- to C-terminus: Mitochondrial amidoxime reducing component 2 (338 aa).

The transit peptide at M1–L35 directs the protein to the mitochondrion. Residues K59, K138, and K144 each participate in a glycyl lysine isopeptide (Lys-Gly) (interchain with G-Cter in ubiquitin) cross-link. An N6-acetyllysine; alternate modification is found at K156. A Glycyl lysine isopeptide (Lys-Gly) (interchain with G-Cter in ubiquitin); alternate cross-link involves residue K156. Residues K173, K187, K289, and K296 each participate in a glycyl lysine isopeptide (Lys-Gly) (interchain with G-Cter in ubiquitin) cross-link. Residues G188–M336 enclose the MOSC domain.

Component of a complex composed of cytochrome b5, NADH-cytochrome b5 reductase (CYB5R3) and MTARC2. Mo-molybdopterin is required as a cofactor. In terms of processing, ubiquitinated by PRKN during mitophagy, leading to its degradation and enhancement of mitophagy. Deubiquitinated by USP30.

The protein localises to the mitochondrion outer membrane. It is found in the peroxisome. It catalyses the reaction N(omega)-hydroxy-L-arginine + 2 Fe(II)-[cytochrome b5] + 2 H(+) = L-arginine + 2 Fe(III)-[cytochrome b5] + H2O. In terms of biological role, catalyzes the reduction of N-oxygenated molecules, acting as a counterpart of cytochrome P450 and flavin-containing monooxygenases in metabolic cycles. As a component of prodrug-converting system, reduces a multitude of N-hydroxylated prodrugs particularly amidoximes, leading to increased drug bioavailability. May be involved in mitochondrial N(omega)-hydroxy-L-arginine (NOHA) reduction, regulating endogenous nitric oxide levels and biosynthesis. Postulated to cleave the N-OH bond of N-hydroxylated substrates in concert with electron transfer from NADH to cytochrome b5 reductase then to cytochrome b5, the ultimate electron donor that primes the active site for substrate reduction. The chain is Mitochondrial amidoxime reducing component 2 (Mtarc2) from Rattus norvegicus (Rat).